The primary structure comprises 283 residues: Ribosomal RNA small subunit methyltransferase H (283 aa).

S-adenosyl-L-methionine-binding positions include 31–33, aspartate 50, phenylalanine 77, aspartate 93, and glutamine 100; that span reads GGH.

It belongs to the methyltransferase superfamily. RsmH family.

It is found in the cytoplasm. It carries out the reaction cytidine(1402) in 16S rRNA + S-adenosyl-L-methionine = N(4)-methylcytidine(1402) in 16S rRNA + S-adenosyl-L-homocysteine + H(+). Specifically methylates the N4 position of cytidine in position 1402 (C1402) of 16S rRNA. The sequence is that of Ribosomal RNA small subunit methyltransferase H from Trichodesmium erythraeum (strain IMS101).